We begin with the raw amino-acid sequence, 295 residues long: Protein LplC (295 aa).

Transmembrane regions (helical) follow at residues 21 to 41 (ILFL…IIAG), 81 to 101 (VSIF…FTMA), 116 to 136 (LNLV…YLVV), 142 to 162 (LDTY…LIII), 199 to 219 (VIAT…FHAL), and 260 to 280 (GIKL…YPFL). The ABC transmembrane type-1 domain occupies 79 to 280 (MGVSIFITVV…LPILAVYPFL (202 aa)).

The protein belongs to the binding-protein-dependent transport system permease family. CysTW subfamily.

It is found in the cell membrane. This chain is Protein LplC (lplC), found in Bacillus subtilis (strain 168).